Reading from the N-terminus, the 106-residue chain is Nucleoid-associated protein RPA0616 (106 aa).

This sequence belongs to the YbaB/EbfC family. Homodimer.

It localises to the cytoplasm. It is found in the nucleoid. In terms of biological role, binds to DNA and alters its conformation. May be involved in regulation of gene expression, nucleoid organization and DNA protection. This Rhodopseudomonas palustris (strain ATCC BAA-98 / CGA009) protein is Nucleoid-associated protein RPA0616.